We begin with the raw amino-acid sequence, 303 residues long: Protein bottleneck (303 aa).

Disordered regions lie at residues 102–142 (SKRN…PTVT) and 185–272 (VATT…ASVR). Composition is skewed to low complexity over residues 115-138 (RQQE…QQQE) and 185-197 (VATT…TANS). Positions 260–272 (ATISRQSSSASVR) are enriched in polar residues.

In terms of tissue distribution, restricted to the blastoderm.

It localises to the cytoplasm. It is found in the cytoskeleton. In terms of biological role, acts as a regulator of the microfilament network governing cellularization of the embryo. Determines the timing of a key conformational transition in the cortical microfilament network: the proper coordination of membrane invagination and basal closure of the cells. To do this, bnk possibly physically links neighboring contractile units of the early cycle 14 microfilament network in a manner that prevents basal constriction until the proper stage has been reached. Bnk together with nullo and Sry-alpha may provide auxiliary functions, by acting both to stabilize a large and dynamic microfilament structure and regulate its functions. The sequence is that of Protein bottleneck (bnk) from Drosophila melanogaster (Fruit fly).